A 215-amino-acid chain; its full sequence is Probable serine/threonine-protein kinase 2 (215 aa).

The region spanning 1–205 is the Protein kinase domain; it reads MKPEQLVYLN…WLLKEMEQLL (205 aa).

It belongs to the protein kinase superfamily. Ser/Thr protein kinase family. In terms of assembly, interacts with the kinase domain of host EIF2AK2.

It is found in the host cytoplasm. It catalyses the reaction L-seryl-[protein] + ATP = O-phospho-L-seryl-[protein] + ADP + H(+). It carries out the reaction L-threonyl-[protein] + ATP = O-phospho-L-threonyl-[protein] + ADP + H(+). In terms of biological role, plays a role in the inhibition of host eIF2alpha/EIF2S1 phosphorylation, thereby increasing viral fitness. In the insect host, targets the endogenous insect heme-regulated inhibitor (HRI)-like eIF2alpha kinase. In Autographa californica nuclear polyhedrosis virus (AcMNPV), this protein is Probable serine/threonine-protein kinase 2 (PK2).